We begin with the raw amino-acid sequence, 1391 residues long: Axoneme-associated protein mst101(2) (1391 aa).

Disordered stretches follow at residues 170-213 (ECNQ…GKKL) and 280-300 (SSEP…EKEL). Residues 184-201 (TKKGKTKGKSGGGNKKRS) show a composition bias toward basic residues. Over residues 291–300 (KNDEKKEKEL) the composition is skewed to basic and acidic residues. 59 consecutive repeat copies span residues 332–347 (KKKC…EEAE), 348–363 (KKKC…EEDE), 364–379 (KKAC…EADE), 380–395 (KKKC…KAAE), 396–411 (KKKC…EAAE), 412–427 (KKKC…EAAE), 428–443 (RKKC…KAAE), 444–459 (KKKC…EAAE), 460–475 (RKKC…KAAE), 476–491 (KKKC…EVAE), 492–507 (RKKC…KAEI), 508–523 (KKKC…ETAE), 524–539 (KKKC…EAAE), 540–555 (KKKC…EAAE), 556–571 (KKKC…EAAE), 572–587 (KKKC…EAAE), 588–603 (KKKC…EVAE), 604–619 (RKKC…KAAE), 620–635 (KKKC…EAAE), 636–651 (REKC…KAAE), 652–667 (KKKC…ETAE), 668–683 (KKKC…EAAE), 684–699 (KKKC…EAAE), 700–715 (KKKC…EAAE), 716–731 (RKKC…KAAE), 732–747 (KKKC…AGEK), 748–763 (NKLK…ALKE), 764–779 (KKKC…AEKK), 780–795 (KCKE…AEKK), 796–811 (KCEK…AEKK), 812–827 (KCEK…AEKK), 828–843 (KCEK…AEKK), 844–859 (KCEK…AEKK), 860–875 (KCEK…AEKK), 876–891 (KCEK…AEKK), 892–907 (KCAE…AEKK), 908–923 (KCEE…AERK), 924–939 (KCEE…AEKK), 940–955 (KCKK…GEKN), 956–971 (KLKK…CKKL), 972–987 (GKKS…CAEA), 988–1003 (AKKE…CEER), 1004–1019 (AKKQ…CEER), 1020–1035 (AKKL…CEER), 1036–1051 (AKKL…CEER), 1052–1067 (AKKL…CEER), 1068–1083 (AKKL…CEER), 1084–1099 (AKKE…CEER), 1100–1115 (AKKL…CEER), 1116–1131 (AKKE…CEEA), 1132–1147 (AKRE…CAEA), 1148–1163 (AKKE…CAEA), 1164–1179 (AKKE…CAEA), 1180–1195 (AKRE…CADL), 1196–1211 (AKKE…CEEA), 1212–1227 (AKKE…CAKA), 1228–1243 (AKKE…CAEA), 1244–1259 (AKKE…CAEA), and 1260–1275 (AKKE…CEKA). Residues 332–1275 (KKKCKDLGRK…AEKKRKCEKA (944 aa)) form a 59 X 16 AA approximate tandem repeats of [KR]-K-X-C-X-X-X-A-K-X-X-K-X-X-X-E region. Residues 370–429 (LAKKKKEADEKKKCEEAANKEKKAAEKKKCEKAAKERKEAAEKKKCEEAAKKEKEAAERK) form a disordered region. The disordered stretch occupies residues 516 to 577 (KKEKETAEKK…EAAEKKKCEK (62 aa)). Basic and acidic residues predominate over residues 517–577 (KEKETAEKKK…EAAEKKKCEK (61 aa)). The span at 729-765 (AAEKKKCKKLAKKKKAGEKNKLKKGNKKGKKALKEKK) shows a compositional bias: basic residues. Disordered regions lie at residues 729–881 (AAEK…EKAA), 900–922 (EKEL…VAER), and 934–1013 (KAAE…AAEK). Basic and acidic residues predominate over residues 766–881 (KCRELAKKKA…AEKKKCEKAA (116 aa)). 2 stretches are compositionally biased toward basic residues: residues 934–949 (KAAE…KKEK) and 956–976 (KLKK…KKSK). Residues 977–1013 (RAAEKKKCAEAAKKEKEAATKKKCEERAKKQKEAAEK) are compositionally biased toward basic and acidic residues. Disordered stretches follow at residues 1076–1095 (EKKQ…EKKQ) and 1104–1212 (KEAA…EEAA). Residues 1353–1370 (KKEKEAAEKKKRCKDLAK) are compositionally biased toward basic and acidic residues. Residues 1353–1391 (KKEKEAAEKKKRCKDLAKNKKKGHKKKGRNENRKKRTDC) are disordered. Residues 1371-1391 (NKKKGHKKKGRNENRKKRTDC) show a composition bias toward basic residues.

As to expression, testis. Primary spermatocytes and early spermatids.

The protein localises to the cytoplasm. In terms of biological role, possible structural role in the sperm tail. This chain is Axoneme-associated protein mst101(2) (mst101(2)), found in Drosophila hydei (Fruit fly).